A 2359-amino-acid polypeptide reads, in one-letter code: Voltage-dependent T-type calcium channel subunit alpha-1H (2359 aa).

The segment at 1–63 is disordered; the sequence is MTEGTLAADE…PGTECGADLG (63 aa). Residues 1-100 are Cytoplasmic-facing; sequence MTEGTLAADE…SWCLRLVCNP (100 aa). Residues 24 to 36 show a composition bias toward low complexity; the sequence is APVRASPASPGAP. Residues 87–422 form an I repeat; the sequence is TRPRSWCLRL…LCLVVIATQF (336 aa). The helical transmembrane segment at 101–119 threads the bilayer; the sequence is WFEHISMLVIMLNCVTLGM. The Extracellular segment spans residues 120–141; that stretch reads FRPCEDVECRSERCSILEAFDD. Zn(2+) is bound at residue Asp140. Residues 142–160 form a helical membrane-spanning segment; sequence FIFAFFAVEMVIKMVALGL. The Cytoplasmic segment spans residues 161–169; it reads FGQKCYLGD. Residues 170–184 form a helical membrane-spanning segment; the sequence is TWNRLDFFIVMAGMM. The Extracellular portion of the chain corresponds to 185–193; it reads EYSLDGHNV. Residues Asp189 and His191 each contribute to the Zn(2+) site. Asn192 carries N-linked (GlcNAc...) asparagine glycosylation. Residues 194 to 212 form a helical membrane-spanning segment; sequence SLSAIRTVRVLRPLRAINR. Residues 213–232 lie on the Cytoplasmic side of the membrane; the sequence is VPSMRILVTLLLDTLPMLGN. A helical transmembrane segment spans residues 233-253; that stretch reads VLLLCFFVFFIFGIVGVQLWA. Residues 254 to 394 are Extracellular-facing; the sequence is GLLRNRCFLD…YYVMDAHSFY (141 aa). The N-linked (GlcNAc...) asparagine glycan is linked to Asn271. Residues 395 to 419 traverse the membrane as a helical segment; it reads NFIYFILLIIMGSFFMINLCLVVIA. Residues 420–790 lie on the Cytoplasmic side of the membrane; that stretch reads TQFSETKQRE…GKLRRIVDSK (371 aa). Disordered regions lie at residues 490–573, 620–656, and 737–769; these read VDPS…SESV, GTVN…SPRP, and GDCR…ASQP. Basic residues predominate over residues 503–532; the sequence is RRPRRAGRRTASVHHLVYHHHHHHHHHYHF. The segment covering 557–566 has biased composition (pro residues); the sequence is PPSPPSPGHG. Residues 620-631 are compositionally biased toward polar residues; that stretch reads GTVNSKGGTSSR. The stretch at 776 to 1015 is one II repeat; it reads WASFSGKLRR…LLVAILVEGF (240 aa). Residues 791-811 form a helical membrane-spanning segment; it reads YFNRGIMAAILVNTLSMGVEY. The Extracellular segment spans residues 812–824; it reads HEQPEELTNALEI. The chain crosses the membrane as a helical span at residues 825–846; sequence SNIVFTSMFALEMLLKLLACGP. The Cytoplasmic portion of the chain corresponds to 847 to 852; the sequence is LGYIRN. Residues 853–871 form a helical membrane-spanning segment; that stretch reads PYNIFDGIVVVISVWEIVG. Residues 872–879 are Extracellular-facing; the sequence is QANGGLSV. A helical transmembrane segment spans residues 880–903; that stretch reads LRTFRLLRVLKLVRFLPALRRQLV. Residues 904–914 lie on the Cytoplasmic side of the membrane; sequence VLMRTMDNVAT. The helical transmembrane segment at 915-935 threads the bilayer; that stretch reads FCMLLMLFIFIFSILGMHLFG. The Extracellular segment spans residues 936 to 987; it reads CKFSLKTDSGDTVPDRKNFDSLLWAIVTVFQILTQEDWNVVLYNGMASTSSW. The chain crosses the membrane as a helical span at residues 988 to 1012; the sequence is AALYFVALMTFGNYVLFNLLVAILV. Residues 1013–1301 lie on the Cytoplasmic side of the membrane; the sequence is EGFQAEGDAT…NRLRVSCQKV (289 aa). Residues 1061–1197 are disordered; the sequence is GHLEGRGSLP…GASPGPRATP (137 aa). The segment covering 1117 to 1126 has biased composition (polar residues); that stretch reads SLASLRSSPC. A compositionally biased stretch (low complexity) spans 1130-1147; sequence GPNSAGSSRRSSWNSLGR. One copy of the III repeat lies at 1292-1569; the sequence is NRLRVSCQKV…MFVGVVVENF (278 aa). A helical membrane pass occupies residues 1302–1324; it reads IAHKMFDHVVLVFIFLNCITIAL. Residues 1325 to 1342 are Extracellular-facing; the sequence is ERPDIDPGSTERAFLSVS. The chain crosses the membrane as a helical span at residues 1343-1363; sequence NYIFTAIFVVEMMVKVVALGL. Over 1364 to 1373 the chain is Cytoplasmic; that stretch reads LWGEHAYLQS. A helical membrane pass occupies residues 1374–1393; the sequence is SWNVLDGLLVLVSLVDIIVA. Over 1394–1407 the chain is Extracellular; the sequence is MASAGGAKILGVLR. Residues 1408–1429 traverse the membrane as a helical segment; the sequence is VLRLLRTLRPLRVISRAPGLKL. Topologically, residues 1430-1439 are cytoplasmic; that stretch reads VVETLISSLR. A helical transmembrane segment spans residues 1440-1463; the sequence is PIGNIVLICCAFFIIFGILGVQLF. Residues 1464 to 1540 are Extracellular-facing; it reads KGKFYYCEGT…DQQPVQNHNP (77 aa). The N-linked (GlcNAc...) asparagine glycan is linked to Asn1477. The helical transmembrane segment at 1541 to 1566 threads the bilayer; that stretch reads WMLLYFISFLLIVSFFVLNMFVGVVV. Topologically, residues 1567–1621 are cytoplasmic; that stretch reads ENFHKCRQHQEAEEARRREEKRLRRLERRRRKAQRRPYYADYSHTRRSIHSLCTS. Residues 1607–1868 form an IV repeat; the sequence is DYSHTRRSIH…VVVAVLMKHL (262 aa). The chain crosses the membrane as a helical span at residues 1622–1642; the sequence is HYLDLFITFIICLNVITMSME. Residues 1643–1656 lie on the Extracellular side of the membrane; sequence HYNQPKSLDEALKY. A helical transmembrane segment spans residues 1657–1678; that stretch reads CNYVFTIVFVFEAALKLVAFGF. The Cytoplasmic portion of the chain corresponds to 1679–1685; the sequence is RRFFKDR. A helical membrane pass occupies residues 1686-1704; it reads WNQLDLAIVLLSIMGIALE. The Extracellular portion of the chain corresponds to 1705 to 1718; the sequence is EIEMNAALPINPTI. Residues 1719–1742 traverse the membrane as a helical segment; the sequence is IRIMRVLRIARVLKLLKMATGMRA. Topologically, residues 1743 to 1756 are cytoplasmic; sequence LLDTVVQALPQVGN. A helical transmembrane segment spans residues 1757–1777; sequence LGLLFMLLFFIYAALGVELFG. At 1778 to 1840 the chain is on the extracellular side; that stretch reads RLECSEDNPC…KHCLSYLPAL (63 aa). Residues 1841–1868 traverse the membrane as a helical segment; it reads SPVYFVTFMLVAQFVLVNVVVAVLMKHL. Topologically, residues 1869-2359 are cytoplasmic; the sequence is EESNKEARED…APDDSGDEPV (491 aa). Polar residues predominate over residues 1891–1911; the sequence is QGSTAQPPPTAQESQGTQPDT. Disordered regions lie at residues 1891 to 1913, 1974 to 2003, 2016 to 2258, and 2335 to 2359; these read QGST…DTPN, SFQV…PRSL, HSES…GERW, and PQTP…DEPV. Residues 2016-2026 show a composition bias toward basic and acidic residues; that stretch reads HSESLEGKVDD. The segment covering 2086–2096 has biased composition (acidic residues); sequence DEAEAADPADE. A compositionally biased stretch (basic and acidic residues) spans 2166-2181; sequence GESHLESGEVRGRASE.

Belongs to the calcium channel alpha-1 subunit (TC 1.A.1.11) family. CACNA1H subfamily. As to quaternary structure, interacts (via N-terminal cytoplasmic domain) with STAC. In terms of processing, in response to raising of intracellular calcium, the T-type channels are activated by CaM-kinase II. In terms of tissue distribution, expressed in brain.

It is found in the cell membrane. It catalyses the reaction Ca(2+)(in) = Ca(2+)(out). In terms of biological role, voltage-sensitive calcium channel that gives rise to T-type calcium currents. T-type calcium channels belong to the 'low-voltage activated (LVA)' group. A particularity of this type of channel is an opening at quite negative potentials, and a voltage-dependent inactivation. T-type channels serve pacemaking functions in both central neurons and cardiac nodal cells and support calcium signaling in secretory cells and vascular smooth muscle. They may also be involved in the modulation of firing patterns of neurons. In the adrenal zona glomerulosa, participates in the signaling pathway leading to aldosterone production in response to either AGT/angiotensin II, or hyperkalemia. This Rattus norvegicus (Rat) protein is Voltage-dependent T-type calcium channel subunit alpha-1H (Cacna1h).